The primary structure comprises 492 residues: GTPase Der (492 aa).

EngA-type G domains follow at residues Phe3–Glu167 and Leu207–Asn382. Residues Gly9 to Ser16, Asp56 to Leu60, Asn119 to Glu122, Gly213 to Ser220, Asp260 to Met264, and Asn325 to Asp328 contribute to the GTP site. A KH-like domain is found at Arg383–Lys469. The tract at residues Leu461–Ser492 is disordered. Basic residues predominate over residues Tyr472 to Ser492.

It belongs to the TRAFAC class TrmE-Era-EngA-EngB-Septin-like GTPase superfamily. EngA (Der) GTPase family. Associates with the 50S ribosomal subunit.

Functionally, GTPase that plays an essential role in the late steps of ribosome biogenesis. The sequence is that of GTPase Der from Ruegeria sp. (strain TM1040) (Silicibacter sp.).